Here is a 448-residue protein sequence, read N- to C-terminus: Adenosylhomocysteinase (448 aa).

Residues Thr-61, Asp-136, and Glu-161 each coordinate substrate. Thr-162–Ala-164 is a binding site for NAD(+). Substrate contacts are provided by Lys-191 and Asp-195. NAD(+)-binding positions include Asn-196, Gly-225–Gly-230, Glu-248, Asn-283, Ile-304–His-306, and Asn-360.

This sequence belongs to the adenosylhomocysteinase family. It depends on NAD(+) as a cofactor.

The protein resides in the cytoplasm. It catalyses the reaction S-adenosyl-L-homocysteine + H2O = L-homocysteine + adenosine. It participates in amino-acid biosynthesis; L-homocysteine biosynthesis; L-homocysteine from S-adenosyl-L-homocysteine: step 1/1. May play a key role in the regulation of the intracellular concentration of adenosylhomocysteine. The polypeptide is Adenosylhomocysteinase (Rhodopirellula baltica (strain DSM 10527 / NCIMB 13988 / SH1)).